We begin with the raw amino-acid sequence, 427 residues long: UDP-N-acetylglucosamine 1-carboxyvinyltransferase 1 (427 aa).

Residue 24-25 (KN) participates in phosphoenolpyruvate binding. R97 is a UDP-N-acetyl-alpha-D-glucosamine binding site. C121 functions as the Proton donor in the catalytic mechanism. At C121 the chain carries 2-(S-cysteinyl)pyruvic acid O-phosphothioketal. UDP-N-acetyl-alpha-D-glucosamine is bound by residues 126-130 (RPIDL), D309, and V331.

This sequence belongs to the EPSP synthase family. MurA subfamily.

It is found in the cytoplasm. The catalysed reaction is phosphoenolpyruvate + UDP-N-acetyl-alpha-D-glucosamine = UDP-N-acetyl-3-O-(1-carboxyvinyl)-alpha-D-glucosamine + phosphate. It functions in the pathway cell wall biogenesis; peptidoglycan biosynthesis. In terms of biological role, cell wall formation. Adds enolpyruvyl to UDP-N-acetylglucosamine. This Lactococcus lactis subsp. lactis (strain IL1403) (Streptococcus lactis) protein is UDP-N-acetylglucosamine 1-carboxyvinyltransferase 1.